A 128-amino-acid chain; its full sequence is MSGYTPDEKLRLQQLRELRRRWLKDQELSPREPVLPPRRMWPLERFWDNFLRDGAVWKNMVFKAYRSSLFAVSHVLIPMWFVHYYVKYHMATKPYTIVSSKPRIFPGDTILETGEVIPPMRDFPDQHH.

Ser2 carries the N-acetylserine modification. Lys24 is modified (N6-acetyllysine). The chain crosses the membrane as a helical span at residues 64–86 (AYRSSLFAVSHVLIPMWFVHYYV).

Belongs to the complex I NDUFB6 subunit family. In terms of assembly, complex I is composed of 45 different subunits.

It is found in the mitochondrion inner membrane. Accessory subunit of the mitochondrial membrane respiratory chain NADH dehydrogenase (Complex I), that is believed not to be involved in catalysis. Complex I functions in the transfer of electrons from NADH to the respiratory chain. The immediate electron acceptor for the enzyme is believed to be ubiquinone. In Mus musculus (Mouse), this protein is NADH dehydrogenase [ubiquinone] 1 beta subcomplex subunit 6 (Ndufb6).